Reading from the N-terminus, the 180-residue chain is Large ribosomal subunit protein uL6 (180 aa).

The protein belongs to the universal ribosomal protein uL6 family. In terms of assembly, part of the 50S ribosomal subunit.

In terms of biological role, this protein binds to the 23S rRNA, and is important in its secondary structure. It is located near the subunit interface in the base of the L7/L12 stalk, and near the tRNA binding site of the peptidyltransferase center. The protein is Large ribosomal subunit protein uL6 of Lachnoclostridium phytofermentans (strain ATCC 700394 / DSM 18823 / ISDg) (Clostridium phytofermentans).